A 431-amino-acid polypeptide reads, in one-letter code: Inactive polypeptide N-acetylgalactosaminyltransferase-like protein 5 (431 aa).

The Cytoplasmic portion of the chain corresponds to 1-4 (MKSV). Residues 5 to 27 (IIQGLFCGFLAIGLWASMLLLFL) traverse the membrane as a helical; Signal-anchor for type II membrane protein segment. The Lumenal portion of the chain corresponds to 28–431 (HLEQEDMLEN…TERKRKKNRF (404 aa)). An N-linked (GlcNAc...) asparagine glycan is attached at N68. 2 disulfides stabilise this stretch: C105–C336 and C327–C403. Residues 114–224 (LPTASIIICF…RVWLEPLLHA (111 aa)) are catalytic subdomain A. Positions 282 to 344 (PIRSPAMTGG…PCSRVGYNSK (63 aa)) are catalytic subdomain B. N-linked (GlcNAc...) asparagine glycans are attached at residues N353 and N390.

This sequence belongs to the glycosyltransferase 2 family. GalNAc-T subfamily. Requires Mn(2+) as cofactor. In terms of tissue distribution, expressed in testis. Mainly expressed in the round and elongated spermatids during spermiogenesis, not in the outermost cells of the seminiferous tubules, which contain spermatogonia and somatic Sertoli cells. Present in the juxtanuclear space in the round spermatids, not in the acrosomal vesicles. In the elongating spermatids, localizes strongly in the acroplaxome, the region between the developing acrosome and nucleus. During differentiation, also weakly detected in the transient manchette containing microtubules. In epididymal spermatozoa, weakly detected in the midpiece, but concentrates mainly in the neck region around the head-tail coupling apparatus (at protein level).

It is found in the late endosome membrane. Probable inactive glycosyltransferase required during spermatid development. May participate in protein loading into the acrosomes and accumulation of ubiquitin-proteasome systems around the head-tail coupling apparatus region. The protein is Inactive polypeptide N-acetylgalactosaminyltransferase-like protein 5 (Galntl5) of Mus musculus (Mouse).